Consider the following 197-residue polypeptide: UPF0725 protein At5g41640 (197 aa).

The protein belongs to the UPF0725 (EMB2204) family.

The chain is UPF0725 protein At5g41640 from Arabidopsis thaliana (Mouse-ear cress).